The chain runs to 358 residues: Peptide chain release factor 1 (358 aa).

Position 235 is an N5-methylglutamine (Q235).

The protein belongs to the prokaryotic/mitochondrial release factor family. Methylated by PrmC. Methylation increases the termination efficiency of RF1.

It is found in the cytoplasm. Peptide chain release factor 1 directs the termination of translation in response to the peptide chain termination codons UAG and UAA. This chain is Peptide chain release factor 1, found in Neisseria meningitidis serogroup C (strain 053442).